Consider the following 652-residue polypeptide: Endoplasmic reticulum chaperone BiP (652 aa).

Residues 1–16 (MRHLLLALLLLGGARA) form the signal peptide. Residues 34–37 (GTTY), Lys-94, 225–227 (GGT), 291–298 (EKAKRALS), and 362–365 (GSTR) each bind ATP. The nucleotide-binding (NBD) stretch occupies residues 123–278 (KPHIQVDVGG…KKKTGKDVRK (156 aa)). Residues 407–417 (QDTGDLVLLDV) form an interdomain linker region. Positions 418–498 (CPLTLGIETV…PRGVPQIEVT (81 aa)) are substrate-binding (SBD). Residues 630 to 652 (SKLYGSAGPPPTGEEEAAEKDEL) form a disordered region. A compositionally biased stretch (acidic residues) spans 642–652 (GEEEAAEKDEL). The Prevents secretion from ER signature appears at 649–652 (KDEL).

Belongs to the heat shock protein 70 family. Monomer and homooligomer; homooligomerization via the interdomain linker inactivates the chaperone activity and acts as a storage of HSPA5/BiP molecules. Interacts with DNAJC10. Interacts with DNAJB9/ERdj4; leading to recruit HSPA5/BiP to ERN1/IRE1. Interacts with ERN1/IRE1; interaction takes place following interaction with DNAJB9/ERdj4 and leads to inactivate ERN1/IRE1.

The protein localises to the endoplasmic reticulum lumen. It localises to the melanosome. The protein resides in the cytoplasm. It is found in the cell surface. It catalyses the reaction ATP + H2O = ADP + phosphate + H(+). Its activity is regulated as follows. The chaperone activity is regulated by ATP-induced allosteric coupling of the nucleotide-binding (NBD) and substrate-binding (SBD) domains. In the ADP-bound and nucleotide-free (apo) states, the two domains have little interaction. In contrast, in the ATP-bound state the two domains are tightly coupled, which results in drastically accelerated kinetics in both binding and release of polypeptide substrates. J domain-containing co-chaperones (DNAJB9/ERdj4 or DNAJC10/ERdj5) stimulate the ATPase activity and are required for efficient substrate recognition by HSPA5/BiP. Homooligomerization inactivates participating HSPA5/BiP protomers and probably act as reservoirs to store HSPA5/BiP molecules when they are not needed by the cell. Functionally, endoplasmic reticulum chaperone that plays a key role in protein folding and quality control in the endoplasmic reticulum lumen. Involved in the correct folding of proteins and degradation of misfolded proteins via its interaction with DNAJC10/ERdj5, probably to facilitate the release of DNAJC10/ERdj5 from its substrate. Acts as a key repressor of the EIF2AK3/PERK and ERN1/IRE1-mediated unfolded protein response (UPR). In the unstressed endoplasmic reticulum, recruited by DNAJB9/ERdj4 to the luminal region of ERN1/IRE1, leading to disrupt the dimerization of ERN1/IRE1, thereby inactivating ERN1/IRE1. Also binds and inactivates EIF2AK3/PERK in unstressed cells. Accumulation of misfolded protein in the endoplasmic reticulum causes release of HSPA5/BiP from ERN1/IRE1 and EIF2AK3/PERK, allowing their homodimerization and subsequent activation. May also play a role in apoptosis and cell proliferation. This Gallus gallus (Chicken) protein is Endoplasmic reticulum chaperone BiP.